The chain runs to 514 residues: Leucine-rich repeat-containing protein 14B (514 aa).

The stretch at 104 to 141 (RRRLRVADLTGIRDVQVQRCPCGRALGRWGRTQLLART) is one LRR 1; degenerate repeat. One copy of the LRR 2; degenerate repeat lies at 185 to 209 (RVHCPSFRADSLSPSQLLHVLRLAG). Residues 238 to 277 (FPRLASLTLPTKAFDAPPTYASTPDGEDPLLASIARELSK) form an LRR 4; degenerate repeat. 5 LRR repeats span residues 278–302 (MAQL…LGPL), 303–334 (QTPL…AHLE), 335–350 (VLDL…YPST), 359–386 (SRTL…GLSP), and 387–411 (CHRL…LFTA).

Belongs to the PRAME family. LRRC14 subfamily.

The polypeptide is Leucine-rich repeat-containing protein 14B (Homo sapiens (Human)).